A 336-amino-acid polypeptide reads, in one-letter code: Tetraacyldisaccharide 4'-kinase (336 aa).

60–67 (TVGGTGKT) contributes to the ATP binding site.

This sequence belongs to the LpxK family.

The enzyme catalyses a lipid A disaccharide + ATP = a lipid IVA + ADP + H(+). It participates in glycolipid biosynthesis; lipid IV(A) biosynthesis; lipid IV(A) from (3R)-3-hydroxytetradecanoyl-[acyl-carrier-protein] and UDP-N-acetyl-alpha-D-glucosamine: step 6/6. Functionally, transfers the gamma-phosphate of ATP to the 4'-position of a tetraacyldisaccharide 1-phosphate intermediate (termed DS-1-P) to form tetraacyldisaccharide 1,4'-bis-phosphate (lipid IVA). In Pseudomonas fluorescens (strain SBW25), this protein is Tetraacyldisaccharide 4'-kinase.